Here is a 407-residue protein sequence, read N- to C-terminus: Phosphopentomutase (407 aa).

Aspartate 10, aspartate 306, histidine 311, aspartate 347, histidine 348, and histidine 359 together coordinate Mn(2+).

The protein belongs to the phosphopentomutase family. Mn(2+) serves as cofactor.

It localises to the cytoplasm. The enzyme catalyses 2-deoxy-alpha-D-ribose 1-phosphate = 2-deoxy-D-ribose 5-phosphate. It carries out the reaction alpha-D-ribose 1-phosphate = D-ribose 5-phosphate. Its pathway is carbohydrate degradation; 2-deoxy-D-ribose 1-phosphate degradation; D-glyceraldehyde 3-phosphate and acetaldehyde from 2-deoxy-alpha-D-ribose 1-phosphate: step 1/2. In terms of biological role, isomerase that catalyzes the conversion of deoxy-ribose 1-phosphate (dRib-1-P) and ribose 1-phosphate (Rib-1-P) to deoxy-ribose 5-phosphate (dRib-5-P) and ribose 5-phosphate (Rib-5-P), respectively. The protein is Phosphopentomutase of Buchnera aphidicola subsp. Acyrthosiphon pisum (strain 5A).